A 175-amino-acid chain; its full sequence is Nucleoside triphosphate/diphosphate phosphatase (175 aa).

Arg23 (proton donor) is an active-site residue. Positions 87, 103, 105, 107, 120, and 123 each coordinate Mg(2+).

It belongs to the Ntdp family. Mg(2+) is required as a cofactor.

It carries out the reaction a ribonucleoside 5'-triphosphate + H2O = a ribonucleoside 5'-diphosphate + phosphate + H(+). It catalyses the reaction a ribonucleoside 5'-diphosphate + H2O = a ribonucleoside 5'-phosphate + phosphate + H(+). Its function is as follows. Has nucleoside phosphatase activity towards nucleoside triphosphates and nucleoside diphosphates. This Halalkalibacterium halodurans (strain ATCC BAA-125 / DSM 18197 / FERM 7344 / JCM 9153 / C-125) (Bacillus halodurans) protein is Nucleoside triphosphate/diphosphate phosphatase.